The chain runs to 250 residues: HTH-type transcriptional regulator SarS (250 aa).

2 DNA-binding regions (H-T-H motif) span residues 53-76 and 177-200; these read FKKIVSDLCYKQSDLVQHIKVLVK and LKDLIETIHHKYPQTVRALNNLKK.

This sequence belongs to the SarA family.

Its subcellular location is the cytoplasm. Functionally, transcriptional regulator that controls expression of some virulence factors in a cell density-dependent manner. The chain is HTH-type transcriptional regulator SarS (sarS) from Staphylococcus aureus (strain MRSA252).